A 149-amino-acid polypeptide reads, in one-letter code: Large ribosomal subunit protein uL15 (149 aa).

The interval 1–52 (MSELLKLHHLRPAPGSNKAKIRKGRGEASKGKTAGRGTKGTKARSTVPAGFE) is disordered.

The protein belongs to the universal ribosomal protein uL15 family. In terms of assembly, part of the 50S ribosomal subunit.

Binds to the 23S rRNA. The sequence is that of Large ribosomal subunit protein uL15 from Thermobifida fusca (strain YX).